We begin with the raw amino-acid sequence, 174 residues long: Shikimate kinase 2 (174 aa).

G12–T17 is a binding site for ATP. The Mg(2+) site is built by T16 and D32. Substrate-binding residues include D34, R58, and G79. The interval Q112–K126 is LID domain. R120 contacts ATP. R139 is a binding site for substrate.

Belongs to the shikimate kinase family. AroL subfamily. As to quaternary structure, monomer. Requires Mg(2+) as cofactor.

Its subcellular location is the cytoplasm. The enzyme catalyses shikimate + ATP = 3-phosphoshikimate + ADP + H(+). The protein operates within metabolic intermediate biosynthesis; chorismate biosynthesis; chorismate from D-erythrose 4-phosphate and phosphoenolpyruvate: step 5/7. Functionally, catalyzes the specific phosphorylation of the 3-hydroxyl group of shikimic acid using ATP as a cosubstrate. This is Shikimate kinase 2 from Escherichia coli O1:K1 / APEC.